Reading from the N-terminus, the 103-residue chain is Integration host factor subunit alpha (103 aa).

The protein belongs to the bacterial histone-like protein family. In terms of assembly, heterodimer of an alpha and a beta chain.

Its function is as follows. This protein is one of the two subunits of integration host factor, a specific DNA-binding protein that functions in genetic recombination as well as in transcriptional and translational control. The sequence is that of Integration host factor subunit alpha from Bartonella bacilliformis (strain ATCC 35685 / KC583 / Herrer 020/F12,63).